The chain runs to 420 residues: MKGPWLVLAALCLSLANLGPRGEDGLDFPEYDGEDRVIHISLKNYKAALKKYEVLALLYHEPIGDDKASQRQFEMEELILELAAQVLEDKGVGFGLVDSEDDAAVAKKLGLDEEDSIYVFKDDEMIEYDGEFSADTLVEFLLDVLEDPVEFIDGSHELAAFENLDDEPKLIGYFKNEDSEHYKAYEDAAEEFHPYIPFFATFDAKVAKTLTLKLNEIDYYEPFHDEPITIPSKPNSEKEIVDFLHQHKRPTLRKLRPDSMYETWEDDLNGIHIVAFAEEDDPDGYEFLQIIKEVAEDNTDNPDLSIIWIDPEDFPLLIPYWEEKFGIDLSRPHIGVVNVTDADSVWMDMDDEEDLPTVDELEDWIEDVLEGEVNTEDDDDDDDDDDDDDDDDDDDDDDDDDDDDDDDDDDDDDDDDDDDD.

An N-terminal signal peptide occupies residues 1–22; the sequence is MKGPWLVLAALCLSLANLGPRG. N-linked (GlcNAc...) asparagine glycosylation is present at asparagine 338. Residues 369-420 are disordered; the sequence is LEGEVNTEDDDDDDDDDDDDDDDDDDDDDDDDDDDDDDDDDDDDDDDDDDDD.

The protein belongs to the calsequestrin family. In terms of assembly, monomer; increases in response to a depletion of intracellular calcium. Homodimer. Homotetramer and homopolymer. Can form linear homooligomers. Ca(2+) ions promote oligomerization. In terms of tissue distribution, detected in skeletal muscle (at protein level). Detected in skeletal muscle.

The protein resides in the endoplasmic reticulum. Its subcellular location is the sarcoplasmic reticulum. It localises to the sarcoplasmic reticulum lumen. The protein localises to the sarcoplasmic reticulum membrane. It is found in the mitochondrion matrix. In terms of biological role, calsequestrin is a high-capacity, moderate affinity, calcium-binding protein and thus acts as an internal calcium store in muscle. Calcium ions are bound by clusters of acidic residues at the protein surface, often at the interface between subunits. Can bind around 80 Ca(2+) ions. Regulates the release of lumenal Ca(2+) via the calcium release channel RYR1; this plays an important role in triggering muscle contraction. Negatively regulates store-operated Ca(2+) entry (SOCE) activity. The chain is Calsequestrin-1 from Pelophylax lessonae (Pool frog).